The chain runs to 747 residues: MAEAVERTDELVREYLLFRGFTHTLRQLDAEIKADKEKGFRVDKIVDQLQQLMQVYDLAALRDYWSYLERRLFSRLEDIYRPTINKLKTSLFRFYLVYTIQTNRNDKAQEFFAKQATELQNQAEWKDWFVLPFLPSPDTNPTFATYFSRQWADTFIISLHNFLSVLFQCMPVPVILNFDAECQRTNQVQEENEVLRQKLFALQAEVHRLKKEEQQQEEAAALVQHKLPPYVSSMDRLGDSELALVCSQRPASLSQSPRVGFLSSLLPQSKKSPSRLSPAQGPPQAQSSAKKDTFSSQATKGKDPVPGAKDGKSLLSGPVPGEASWTHQRQRRLQDHGKERRELLSTSSSQTQCAEKKLEGSGPEAELCLDLHMGPVEALARVSTAGSEGDRPEQPFIVLSQEEYGEHHSSIMHCRVDCSGRRVASLDVDGVIKVWSFNPIMQTKASSISKSPLLSLEWATKRDRLLLLGSGVGTVRLYDTEAKKNLCEININDDMPRILSLACSPNGASFVCSAAAPSLTSQPDSSAPDIGSKGMNQVPGKLLLWDTKTMKQQLQFSLDPEPIAINCTAFNHNGNLLVTGAADGVIRLFDMQQHGCAMSWKAHCGEVYSVEFSYDENAVNSIGEDGKFIQWNIHKSGLKVSEYSLPSDATGPFVLSGYSGYKQVQVPRGRLFAFDSEGNYMLTCSATGGLIYKLGSEEKVLENCLSLGGHRAPVVTVDWSTAMDCGTCLTASMDGKIKLTTLLAHKL.

The stretch at 183-227 (QRTNQVQEENEVLRQKLFALQAEVHRLKKEEQQQEEAAALVQHKL) forms a coiled coil. Ser-256 carries the post-translational modification Phosphoserine. Residues 265–278 (LLPQSKKSPSRLSP) show a composition bias toward low complexity. The segment at 265–358 (LLPQSKKSPS…SQTQCAEKKL (94 aa)) is disordered. A compositionally biased stretch (polar residues) spans 283–299 (PQAQSSAKKDTFSSQAT). Ser-288 is modified (phosphoserine). Residues 332–343 (RLQDHGKERREL) are compositionally biased toward basic and acidic residues. Over residues 344–353 (LSTSSSQTQC) the composition is skewed to polar residues. WD repeat units lie at residues 406 to 445 (EHHSSIMHCRVDCSGRRVASLDVDGVIKVWSFNPIMQTKA), 448 to 488 (ISKS…NLCE), 511 to 555 (VCSA…QQLQ), 560 to 599 (PEPIAINCTAFNHNGNLLVTGAADGVIRLFDMQQHGCAMS), 602 to 641 (AHCGEVYSVEFSYDENAVNSIGEDGKFIQWNIHKSGLKVS), 664 to 702 (VQVPRGRLFAFDSEGNYMLTCSATGGLIYKLGSEEKVLE), and 709 to 747 (GHRAPVVTVDWSTAMDCGTCLTASMDGKIKLTTLLAHKL).

The protein belongs to the WD repeat WDR91 family. As to quaternary structure, interacts with WDR81; involved in early to late endosome cargo transport. Interacts with BECN1; negatively regulates the PI3 kinase/PI3K activity associated with endosomal membranes.

The protein localises to the early endosome membrane. Its subcellular location is the late endosome membrane. Functions as a negative regulator of the PI3 kinase/PI3K activity associated with endosomal membranes via BECN1, a core subunit of the PI3K complex. By modifying the phosphatidylinositol 3-phosphate/PtdInsP3 content of endosomal membranes may regulate endosome fusion, recycling, sorting and early to late endosome transport. It is for instance, required for the delivery of cargos like BST2/tetherin from early to late endosome and thereby participates indirectly to their degradation by the lysosome. May play a role in meiosis. The polypeptide is WD repeat-containing protein 91 (Rattus norvegicus (Rat)).